The primary structure comprises 930 residues: Translation initiation factor IF-2 (930 aa).

Residues F50–V67 show a composition bias toward low complexity. 2 disordered regions span residues F50–E217 and E260–P346. Basic and acidic residues-rich tracts occupy residues S68 to P90 and F110 to R125. The segment covering K129 to R141 has biased composition (low complexity). Basic and acidic residues-rich tracts occupy residues R157–K167 and V262–R295. The span at N309–N318 shows a compositional bias: low complexity. Residues V337–P346 show a composition bias toward basic and acidic residues. Positions E432–E599 constitute a tr-type G domain. The tract at residues G441–T448 is G1. G441–T448 serves as a coordination point for GTP. A G2 region spans residues G466–H470. A G3 region spans residues D487–G490. GTP contacts are provided by residues D487 to H491 and N541 to D544. The G4 stretch occupies residues N541–D544. A G5 region spans residues S577–K579.

Belongs to the TRAFAC class translation factor GTPase superfamily. Classic translation factor GTPase family. IF-2 subfamily.

Its subcellular location is the cytoplasm. Functionally, one of the essential components for the initiation of protein synthesis. Protects formylmethionyl-tRNA from spontaneous hydrolysis and promotes its binding to the 30S ribosomal subunits. Also involved in the hydrolysis of GTP during the formation of the 70S ribosomal complex. This chain is Translation initiation factor IF-2, found in Streptococcus pneumoniae (strain ATCC 700669 / Spain 23F-1).